The following is a 69-amino-acid chain: Photosystem I reaction center subunit IV (69 aa).

Belongs to the PsaE family.

The protein localises to the cellular thylakoid membrane. Its function is as follows. Stabilizes the interaction between PsaC and the PSI core, assists the docking of the ferredoxin to PSI and interacts with ferredoxin-NADP oxidoreductase. The chain is Photosystem I reaction center subunit IV from Prochlorococcus marinus (strain MIT 9215).